Here is a 154-residue protein sequence, read N- to C-terminus: Small ribosomal subunit protein bS6 (154 aa).

Positions 107–154 (KSDDRERGFRGPKPPGRFESGRKRGYDDREEFRARAGGDDDDRGLDQE) are disordered. Over residues 125-154 (ESGRKRGYDDREEFRARAGGDDDDRGLDQE) the composition is skewed to basic and acidic residues.

The protein belongs to the bacterial ribosomal protein bS6 family.

Its function is as follows. Binds together with bS18 to 16S ribosomal RNA. The polypeptide is Small ribosomal subunit protein bS6 (Granulibacter bethesdensis (strain ATCC BAA-1260 / CGDNIH1)).